Here is a 114-residue protein sequence, read N- to C-terminus: MRIFVYGSLRTKQGNSHWMTNALLLGEYSIDNYQLYSLGHYPGAVPGNGTVHGEVYRIDNATLAELDALRTRGGEYARQLIQTPYGSAWMYVYQRPVEGLTLIESGNWLDRDQY.

The protein belongs to the gamma-glutamylcyclotransferase family.

It is found in the cytoplasm. Functionally, may play a role in antibiotic biosynthesis. The chain is Gamma-glutamylcyclotransferase family protein ytfP (ytfP) from Citrobacter rodentium (strain ICC168) (Citrobacter freundii biotype 4280).